Consider the following 68-residue polypeptide: uncharacterized protein (68 aa).

The signal sequence occupies residues 1 to 28 (MNKEQSADDPSVDLIRVKNMLNSTISMS).

This is an uncharacterized protein from Escherichia coli (strain K12).